The chain runs to 456 residues: Divalent metal cation transporter MntH (456 aa).

Helical transmembrane passes span 47-67 (ALSFFGPGYLVAVGYMDPGNW), 77-97 (FGYALLSVVLLSNLMAVLLQA), 123-143 (AWPLWLLAELAICATDLAEVI), 151-171 (LLFGIPLEIGVILTAVDVLLV), 184-204 (ALIITLLGVIALCFLTQIIMA), 227-247 (MLYIALGIIGATVMPHNLYLH), 276-296 (IALTFALVINASILILAAASF), 316-336 (PLLGSAIAPALFAIALLCCGL), 369-389 (FVAIVPAAIVTILYGSQGTTE), 392-412 (ILSQVVLSLQLPFAVIPLVIF), and 422-442 (LAAAPWVTFLAAITAAIIVVL).

This sequence belongs to the NRAMP family.

The protein resides in the cell inner membrane. Its function is as follows. H(+)-stimulated, divalent metal cation uptake system. The sequence is that of Divalent metal cation transporter MntH from Brucella suis biovar 1 (strain 1330).